The sequence spans 483 residues: Sphingomyelin phosphodiesterase 5 (483 aa).

The tract at residues 1-20 is disordered; the sequence is MSLPDISRRRSPVPQEDWPL. A helical transmembrane segment spans residues 80–100; it reads VLLPLVVVGLPLALVGLALWL. Glu209 lines the Mg(2+) pocket. The active-site Proton acceptor is His471.

Belongs to the neutral sphingomyelinase family. It depends on Mg(2+) as a cofactor. The cofactor is Mn(2+). As to expression, highly expressed in testis, pancreas, epididymis, and brain.

It is found in the mitochondrion inner membrane. It localises to the endoplasmic reticulum membrane. It catalyses the reaction a sphingomyelin + H2O = phosphocholine + an N-acylsphing-4-enine + H(+). The catalysed reaction is N-(hexadecanoyl)-sphing-4-enine-1-phosphocholine + H2O = N-hexadecanoylsphing-4-enine + phosphocholine + H(+). It functions in the pathway lipid metabolism; sphingolipid metabolism. With respect to regulation, activated by anionic phospholipids, specially cardiolipin and phosphatidylserine. Functionally, catalyzes the hydrolysis of membrane sphingomyelin to form phosphorylcholine and ceramide. This is Sphingomyelin phosphodiesterase 5 from Mus musculus (Mouse).